The following is a 208-amino-acid chain: MDDVTKALNLVPMVVEQTSRGERAYDIYSRLLKERLIFLVGPIDDYMANLIVAQLLFLEAENPEKDINIYINSPGGVVTAGMAIYDTMQYIKPAVSTICVGQAASMGALLLASGASGKRYALPNSRVMIHQPLGGFQGQATDIDIHAREILALRARLNEILAKHTGQSLETIAHDTERDNFKSAVDAQAYGLVDQVLGQRPEELIQSS.

Ser-105 serves as the catalytic Nucleophile. His-130 is an active-site residue.

The protein belongs to the peptidase S14 family. In terms of assembly, fourteen ClpP subunits assemble into 2 heptameric rings which stack back to back to give a disk-like structure with a central cavity, resembling the structure of eukaryotic proteasomes.

Its subcellular location is the cytoplasm. It carries out the reaction Hydrolysis of proteins to small peptides in the presence of ATP and magnesium. alpha-casein is the usual test substrate. In the absence of ATP, only oligopeptides shorter than five residues are hydrolyzed (such as succinyl-Leu-Tyr-|-NHMec, and Leu-Tyr-Leu-|-Tyr-Trp, in which cleavage of the -Tyr-|-Leu- and -Tyr-|-Trp bonds also occurs).. Functionally, cleaves peptides in various proteins in a process that requires ATP hydrolysis. Has a chymotrypsin-like activity. Plays a major role in the degradation of misfolded proteins. The protein is ATP-dependent Clp protease proteolytic subunit of Xylella fastidiosa (strain 9a5c).